Reading from the N-terminus, the 228-residue chain is Urease accessory protein UreG (228 aa).

34 to 41 (GPVGSGKT) lines the GTP pocket.

Belongs to the SIMIBI class G3E GTPase family. UreG subfamily. As to quaternary structure, homodimer. UreD, UreF and UreG form a complex that acts as a GTP-hydrolysis-dependent molecular chaperone, activating the urease apoprotein by helping to assemble the nickel containing metallocenter of UreC. The UreE protein probably delivers the nickel.

The protein resides in the cytoplasm. Facilitates the functional incorporation of the urease nickel metallocenter. This process requires GTP hydrolysis, probably effectuated by UreG. The polypeptide is Urease accessory protein UreG (Rhodococcus opacus (strain B4)).